The following is a 150-amino-acid chain: MSKTLSFKTYSAKPGEVERAWYVIDAENQVLGRLAAQVATVLRGKHKPQFTPHVDTGDFVVVTNAGKIALSGKKHDDKTYFSHSHYPGGAKFEQAKDLLQKKPEKVIEHAVWGMLPHNNLGRQLFKKLKVYAGPEHPHAAQMPVEMKVNQ.

This sequence belongs to the universal ribosomal protein uL13 family. As to quaternary structure, part of the 50S ribosomal subunit.

Functionally, this protein is one of the early assembly proteins of the 50S ribosomal subunit, although it is not seen to bind rRNA by itself. It is important during the early stages of 50S assembly. The chain is Large ribosomal subunit protein uL13 from Chlorobaculum parvum (strain DSM 263 / NCIMB 8327) (Chlorobium vibrioforme subsp. thiosulfatophilum).